Consider the following 464-residue polypeptide: MTGRVTSVRGPVLDIRVEGPLPAIGDVVEVGSLPVVAEIQAHLGAADVRAIALHSTQGIARGETVRTTGGPLRVPTGPAVLGRLLDVAGRPADLGPPIPAGAPRAPILHPAPPLAAQDARFQVFSTGIKVLDLLAPLAQGGKTAMFGGAGVGKTVLVMELIRAMVSGYDGISVFAGVGERSREGHEMLGEMKASGVLDRTVLVYGQMNEPPGARWRVPLTALTIAEGFRDGEGRNVLLLIDNVFRFVQAGAEVSGLLGRMPSRVGYQPTLETEVAALQERIASVGRASVTAIEAVYVPADDFTDPAVTAISAHVDSTVVLSRQLAAEGIYPAIDPLATTSVLLDPAVVGEEHARVAGRLKEAIEHYHELRDVIALLGIEELGREEQLMVGRARKLQRFLTQPFFVAAAYTGMEGRSVPVAETVQGCAAILGGECDDWDEGSLYMIGTLAEARAREEARRRKGAA.

147–154 (GGAGVGKT) provides a ligand contact to ATP.

It belongs to the ATPase alpha/beta chains family. In terms of assembly, F-type ATPases have 2 components, CF(1) - the catalytic core - and CF(0) - the membrane proton channel. CF(1) has five subunits: alpha(3), beta(3), gamma(1), delta(1), epsilon(1). CF(0) has four main subunits: a(1), b(1), b'(1) and c(9-12).

It is found in the cell inner membrane. It catalyses the reaction ATP + H2O + 4 H(+)(in) = ADP + phosphate + 5 H(+)(out). Produces ATP from ADP in the presence of a proton gradient across the membrane. The catalytic sites are hosted primarily by the beta subunits. The sequence is that of ATP synthase subunit beta 2 from Cereibacter sphaeroides (strain ATCC 17023 / DSM 158 / JCM 6121 / CCUG 31486 / LMG 2827 / NBRC 12203 / NCIMB 8253 / ATH 2.4.1.) (Rhodobacter sphaeroides).